A 237-amino-acid polypeptide reads, in one-letter code: Ubiquinone biosynthesis O-methyltransferase (237 aa).

The S-adenosyl-L-methionine site is built by Arg38, Gly57, Asp78, and Met122.

This sequence belongs to the methyltransferase superfamily. UbiG/COQ3 family.

The enzyme catalyses a 3-demethylubiquinol + S-adenosyl-L-methionine = a ubiquinol + S-adenosyl-L-homocysteine + H(+). The catalysed reaction is a 3-(all-trans-polyprenyl)benzene-1,2-diol + S-adenosyl-L-methionine = a 2-methoxy-6-(all-trans-polyprenyl)phenol + S-adenosyl-L-homocysteine + H(+). The protein operates within cofactor biosynthesis; ubiquinone biosynthesis. O-methyltransferase that catalyzes the 2 O-methylation steps in the ubiquinone biosynthetic pathway. The protein is Ubiquinone biosynthesis O-methyltransferase of Methylococcus capsulatus (strain ATCC 33009 / NCIMB 11132 / Bath).